We begin with the raw amino-acid sequence, 240 residues long: Poxin (240 aa).

Residue H46 is the Proton donor of the active site. Residue Y181 is the Shared with catalytic histidine of dimeric partner of the active site. K185 (proton acceptor; shared with catalytic histidine of dimeric partner) is an active-site residue.

The protein belongs to the poxin family. As to quaternary structure, homodimer.

It carries out the reaction 2',3'-cGAMP + H2O = Gp(2'-5')Ap(3') + H(+). Nuclease that cleaves host 2',3'-cGAMP. This is Poxin (P26) from Lepidoptera (butterflies and moths).